Consider the following 1092-residue polypeptide: DNA polymerase delta catalytic subunit (1092 aa).

The segment at 1-71 (MDGKRKFNGT…SRPPPPELDP (71 aa)) is disordered. The Nuclear localization signal motif lies at 4 to 19 (KRKFNGTSNGHAKKPR). Zn(2+)-binding residues include cysteine 997, cysteine 1000, cysteine 1014, and cysteine 1017. The CysA-type zinc finger occupies 997–1017 (CLGCKSLMPKGYEQACLCPHC). Positions 1046, 1049, 1059, and 1064 each coordinate [4Fe-4S] cluster. Residues 1046 to 1064 (CQRCQESLHEEVICSNRDC) carry the CysB motif motif.

The protein belongs to the DNA polymerase type-B family. Catalytic component of the DNA polymerase delta complex consisting of three subunits: the catalytic subunit PolD1 and two accessory subunits PolD2/Pol31 and PolD3/Pol32. Within the delta complex, interacts with both PolD2 and PolD3, and is able to interact with PolD2 in the absence of PolD3. Interacts with PCNA and PCNA2. [4Fe-4S] cluster is required as a cofactor. It depends on Mg(2+) as a cofactor. In terms of tissue distribution, expressed in ovaries (at the protein level). Expressed in embryos (at the protein level).

It is found in the nucleus. Its subcellular location is the nucleoplasm. The catalysed reaction is DNA(n) + a 2'-deoxyribonucleoside 5'-triphosphate = DNA(n+1) + diphosphate. With respect to regulation, inhibited by KCL. Also inhibited by carbonyldiphosphonate, aphidicolin and N-ethylmaleimide (NEM). Functionally, as the catalytic component of the DNA polymerase delta complex, plays a crucial role in high fidelity genome replication, including lagging strand synthesis, DNA recombination and repair. Exhibits both DNA polymerase and 3'- to 5'-exonuclease activities. Required at the nucleus of rapidly dividing embryonic cells to activate genome replication during the earliest cell cycles. Likely to require the presence of accessory proteins PolD2 and PolD3 for full activity. The polypeptide is DNA polymerase delta catalytic subunit (Drosophila melanogaster (Fruit fly)).